The chain runs to 332 residues: Procathepsin L (332 aa).

The first 17 residues, 1–17 (MHPLLFLAGLCLGVASA), serve as a signal peptide directing secretion. The propeptide at 18-112 (APQLYQSLDA…KVFQAPFFVE (95 aa)) is activation peptide. Glutamate 121 serves as a coordination point for Zn(2+). Cysteine 137 is a catalytic residue. 4 residues coordinate Zn(2+): glutamate 162, aspartate 183, glutamate 198, and aspartate 208. A disulfide bond links cysteine 168 and cysteine 210. Asparagine 220 carries N-linked (GlcNAc...) asparagine glycosylation. Zn(2+)-binding residues include aspartate 226, aspartate 249, aspartate 272, and aspartate 274. Cysteine 268 and cysteine 321 are joined by a disulfide. Residue histidine 275 is part of the active site. The propeptide occupies 288–290 (ETE). Residue asparagine 299 is part of the active site.

It belongs to the peptidase C1 family. As to quaternary structure, dimer of a heavy and a light chain linked by disulfide bonds. Interacts with Long isoform of CD74/Ii chain; the interaction stabilizes the conformation of mature CTSL. During export along the endocytic pathway, pro-CTSL undergoes several proteolytic cleavages to generate the CTSL single-chain and two-chain mature forms, composed of a heavy chain linked to a light chain by disulfide bonds. Autocleavage; produces the single-chain CTSL after cleavage of the propeptide. The cleavage can be intermolecular. As to expression, expressed in the endometrium.

Its subcellular location is the lysosome. The protein localises to the apical cell membrane. It is found in the cytoplasmic vesicle. It localises to the secretory vesicle. The protein resides in the chromaffin granule. Its subcellular location is the secreted. The protein localises to the extracellular space. The enzyme catalyses Specificity close to that of papain. As compared to cathepsin B, cathepsin L exhibits higher activity toward protein substrates, but has little activity on Z-Arg-Arg-NHMec, and no peptidyl-dipeptidase activity.. Inhibited by the propeptide produced by autocleavage. Long isoform of CD74/Ii chain stabilizes the conformation of mature CTSL by binding to its active site and serving as a chaperone to help maintain a pool of mature enzyme in endocytic compartments and extracellular space of APCs. IFNG enhances the conversion into the CTSL mature and active form. Inhibited by CST6. Inhibited by the glycopeptide antibiotic teicoplanin. Inhibited by amantadine. Its function is as follows. Thiol protease important for the overall degradation of proteins in lysosomes. Plays a critical for normal cellular functions such as general protein turnover, antigen processing and bone remodeling. Involved in the solubilization of cross-linked TG/thyroglobulin and in the subsequent release of thyroid hormone thyroxine (T4) by limited proteolysis of TG/thyroglobulin in the thyroid follicle lumen. In neuroendocrine chromaffin cells secretory vesicles, catalyzes the prohormone proenkephalin processing to the active enkephalin peptide neurotransmitter. In thymus, regulates CD4(+) T cell positive selection by generating the major histocompatibility complex class II (MHCII) bound peptide ligands presented by cortical thymic epithelial cells. Also mediates invariant chain processing in cortical thymic epithelial cells. Major elastin-degrading enzyme at neutral pH. Accumulates as a mature and active enzyme in the extracellular space of antigen presenting cells (APCs) to regulate degradation of the extracellular matrix in the course of inflammation. Secreted form generates endostatin from COL18A1. Critical for cardiac morphology and function. Plays an important role in hair follicle morphogenesis and cycling, as well as epidermal differentiation. Required for maximal stimulation of steroidogenesis by TIMP1. In Felis catus (Cat), this protein is Procathepsin L (CTSL).